A 155-amino-acid polypeptide reads, in one-letter code: Protein FAM162A (155 aa).

Positions Arg77 to Lys103 are required for proapoptotic activity. Residues Val104–Ile121 form a helical membrane-spanning segment.

Belongs to the UPF0389 family. In terms of assembly, interacts with HSP90AB1; HSP90AB1 is essential for FAM162A mitochondrial localization and pro-apoptotic activity. Interacts with VDAC2; the interaction is probably involved in inducing mitochondrial permeability transition.

The protein resides in the mitochondrion membrane. Its function is as follows. Proposed to be involved in regulation of apoptosis; the exact mechanism may differ between cell types/tissues. May be involved in hypoxia-induced cell death of transformed cells implicating cytochrome C release and caspase activation (such as CASP9) and inducing mitochondrial permeability transition. May be involved in hypoxia-induced cell death of neuronal cells probably by promoting release of AIFM1 from mitochondria to cytoplasm and its translocation to the nucleus; however, the involvement of caspases has been reported conflictingly. The chain is Protein FAM162A (Fam162a) from Mus musculus (Mouse).